The sequence spans 565 residues: Thiol:disulfide interchange protein DsbD (565 aa).

The signal sequence occupies residues 1–19; that stretch reads MAQRIFTLILLLCSTSVFA. 2 cysteine pairs are disulfide-bonded: Cys-122-Cys-128 and Cys-182-Cys-304. A run of 7 helical transmembrane segments spans residues 163 to 183, 208 to 228, 243 to 263, 296 to 316, 323 to 343, 357 to 377, and 384 to 404; these read LPFS…TPCV, LLTF…GLVV, YVLI…FGLF, IAGL…LLYI, WLGG…LMLI, WMEQ…VFLL, and VWGL…AFIT. Positions 434-565 constitute a Thioredoxin domain; the sequence is WAFGATHTAQ…FSAHLRDRQP (132 aa). The cysteines at positions 480 and 483 are disulfide-linked.

Belongs to the thioredoxin family. DsbD subfamily.

Its subcellular location is the cell inner membrane. The catalysed reaction is [protein]-dithiol + NAD(+) = [protein]-disulfide + NADH + H(+). It carries out the reaction [protein]-dithiol + NADP(+) = [protein]-disulfide + NADPH + H(+). Required to facilitate the formation of correct disulfide bonds in some periplasmic proteins and for the assembly of the periplasmic c-type cytochromes. Acts by transferring electrons from cytoplasmic thioredoxin to the periplasm. This transfer involves a cascade of disulfide bond formation and reduction steps. The chain is Thiol:disulfide interchange protein DsbD from Shigella flexneri serotype 5b (strain 8401).